Here is a 763-residue protein sequence, read N- to C-terminus: Serine/threonine-protein kinase PknG (763 aa).

Positions 1–32 are disordered; the sequence is MKREHMDHDTEDVGQAAQRADPPSGTTEGRLQ. Residues 160–406 form the Protein kinase domain; sequence YEVKGCIAHG…SAEEMSAQLM (247 aa). Residues 166–174 and K190 contribute to the ATP site; that span reads IAHGGLGWV. Residue D289 is the Proton acceptor of the active site.

Belongs to the protein kinase superfamily. Ser/Thr protein kinase family. Autophosphorylated.

The enzyme catalyses L-seryl-[protein] + ATP = O-phospho-L-seryl-[protein] + ADP + H(+). It carries out the reaction L-threonyl-[protein] + ATP = O-phospho-L-threonyl-[protein] + ADP + H(+). The sequence is that of Serine/threonine-protein kinase PknG (pknG) from Mycobacterium leprae (strain TN).